Reading from the N-terminus, the 231-residue chain is Ion-translocating oxidoreductase complex subunit E (231 aa).

6 helical membrane-spanning segments follow: residues A18–A38, L39–L59, T63–V83, L86–V106, A125–L145, and P182–G202.

It belongs to the NqrDE/RnfAE family. The complex is composed of six subunits: RsxA, RsxB, RsxC, RsxD, RsxE and RsxG.

The protein resides in the cell inner membrane. In terms of biological role, part of a membrane-bound complex that couples electron transfer with translocation of ions across the membrane. Required to maintain the reduced state of SoxR. The chain is Ion-translocating oxidoreductase complex subunit E from Shigella boydii serotype 18 (strain CDC 3083-94 / BS512).